Reading from the N-terminus, the 378-residue chain is Deoxyguanosinetriphosphate triphosphohydrolase-like protein (378 aa).

The interval 1–28 is disordered; that stretch reads MLAPFACQPGESRGRQKPESMSTFRSPF. An HD domain is found at 62–198; sequence RLTHSIEVAQ…AAIADDVAYS (137 aa).

This sequence belongs to the dGTPase family. Type 2 subfamily.

This is Deoxyguanosinetriphosphate triphosphohydrolase-like protein from Cereibacter sphaeroides (strain ATCC 17029 / ATH 2.4.9) (Rhodobacter sphaeroides).